A 339-amino-acid polypeptide reads, in one-letter code: Fructose-1,6-bisphosphatase class 1 (339 aa).

E91, D113, L115, and D116 together coordinate Mg(2+). Residues 116–119, N208, and K274 contribute to the substrate site; that span reads DGSS. Mg(2+) is bound at residue E280.

The protein belongs to the FBPase class 1 family. Homotetramer. It depends on Mg(2+) as a cofactor.

Its subcellular location is the cytoplasm. The enzyme catalyses beta-D-fructose 1,6-bisphosphate + H2O = beta-D-fructose 6-phosphate + phosphate. The protein operates within carbohydrate biosynthesis; gluconeogenesis. The protein is Fructose-1,6-bisphosphatase class 1 of Cupriavidus pinatubonensis (strain JMP 134 / LMG 1197) (Cupriavidus necator (strain JMP 134)).